A 249-amino-acid chain; its full sequence is 23S rRNA (guanosine-2'-O-)-methyltransferase RlmB (249 aa).

3 residues coordinate S-adenosyl-L-methionine: glycine 200, isoleucine 220, and leucine 229.

This sequence belongs to the class IV-like SAM-binding methyltransferase superfamily. RNA methyltransferase TrmH family. RlmB subfamily.

The protein resides in the cytoplasm. The enzyme catalyses guanosine(2251) in 23S rRNA + S-adenosyl-L-methionine = 2'-O-methylguanosine(2251) in 23S rRNA + S-adenosyl-L-homocysteine + H(+). Functionally, specifically methylates the ribose of guanosine 2251 in 23S rRNA. The chain is 23S rRNA (guanosine-2'-O-)-methyltransferase RlmB from Xanthomonas axonopodis pv. citri (strain 306).